A 531-amino-acid polypeptide reads, in one-letter code: Polypyrimidine tract-binding protein 2 (531 aa).

Met-1 bears the N-acetylmethionine mark. Residues Ser-26 and Ser-27 each carry the phosphoserine modification. 2 RRM domains span residues 59-133 (RVLH…YSNH) and 181-257 (LRII…FSKL). Position 308 is a phosphoserine (Ser-308). 2 RRM domains span residues 338 to 412 (TVLL…LSKH) and 455 to 529 (ATLH…FSKS).

As to quaternary structure, monomer. Interacts with NOVA1; the interaction is direct. Identified in a mRNP complex, at least composed of DHX9, DDX3X, ELAVL1, HNRNPU, IGF2BP1, ILF3, PABPC1, PCBP2, PTBP2, STAU1, STAU2, SYNCRIP and YBX1. Part of a ternary complex containing KHSRP and HNRPH1. Interacts with NOVA2; the interaction is direct. Mainly expressed in brain although also detected in other tissues like heart and skeletal muscle. Isoform 1 and isoform 2 are specifically expressed in neuronal tissues. Isoform 3 and isoform 4 are expressed in non-neuronal tissues. Isoform 5 and isoform 6 are truncated forms expressed in non-neuronal tissues.

The protein resides in the nucleus. Its function is as follows. RNA-binding protein which binds to intronic polypyrimidine tracts and mediates negative regulation of exons splicing. May antagonize in a tissue-specific manner the ability of NOVA1 to activate exon selection. In addition to its function in pre-mRNA splicing, plays also a role in the regulation of translation. In terms of biological role, reduced affinity for RNA. In Homo sapiens (Human), this protein is Polypyrimidine tract-binding protein 2.